The sequence spans 198 residues: Recombination protein RecR (198 aa).

The C4-type zinc-finger motif lies at 57–72; it reads CSVCGHITDQDPCYIC. The region spanning 80–175 is the Toprim domain; sequence SVICVVQDPK…KLSRIAHGLP (96 aa).

This sequence belongs to the RecR family.

In terms of biological role, may play a role in DNA repair. It seems to be involved in an RecBC-independent recombinational process of DNA repair. It may act with RecF and RecO. The sequence is that of Recombination protein RecR from Bacillus pumilus (strain SAFR-032).